A 418-amino-acid polypeptide reads, in one-letter code: Tyrosine--tRNA ligase 1 (418 aa).

An L-tyrosine-binding site is contributed by Tyr34. A 'HIGH' region motif is present at residues 39–48; that stretch reads PTADSLHIGH. Positions 169 and 173 each coordinate L-tyrosine. The short motif at 230-234 is the 'KMSKS' region element; the sequence is KFGKT. Position 233 (Lys233) interacts with ATP. The 67-residue stretch at 352-418 folds into the S4 RNA-binding domain; it reads TVLIDLLVES…GKKKYFLIRY (67 aa).

The protein belongs to the class-I aminoacyl-tRNA synthetase family. TyrS type 1 subfamily. In terms of assembly, homodimer.

Its subcellular location is the cytoplasm. The enzyme catalyses tRNA(Tyr) + L-tyrosine + ATP = L-tyrosyl-tRNA(Tyr) + AMP + diphosphate + H(+). Functionally, catalyzes the attachment of tyrosine to tRNA(Tyr) in a two-step reaction: tyrosine is first activated by ATP to form Tyr-AMP and then transferred to the acceptor end of tRNA(Tyr). The chain is Tyrosine--tRNA ligase 1 from Bacillus anthracis.